A 195-amino-acid chain; its full sequence is Probable molybdenum cofactor guanylyltransferase (195 aa).

GTP-binding positions include 6-8 (LAG), Lys18, Asp67, and Asp93. Residue Asp93 coordinates Mg(2+).

Belongs to the MobA family. Mg(2+) is required as a cofactor.

The protein localises to the cytoplasm. The catalysed reaction is Mo-molybdopterin + GTP + H(+) = Mo-molybdopterin guanine dinucleotide + diphosphate. Transfers a GMP moiety from GTP to Mo-molybdopterin (Mo-MPT) cofactor (Moco or molybdenum cofactor) to form Mo-molybdopterin guanine dinucleotide (Mo-MGD) cofactor. The polypeptide is Probable molybdenum cofactor guanylyltransferase (Thermococcus sibiricus (strain DSM 12597 / MM 739)).